A 314-amino-acid chain; its full sequence is Cytosolic sulfotransferase 3 (314 aa).

71–76 provides a ligand contact to 3'-phosphoadenylyl sulfate; that stretch reads KSGTLW. His121 acts as the Proton acceptor in catalysis. 3'-phosphoadenylyl sulfate contacts are provided by residues Arg143, Ser151, Tyr209, and 275 to 277; that span reads RKG.

The protein belongs to the sulfotransferase 1 family.

The protein localises to the cytoplasm. Functionally, sulfotransferase that utilizes 3'-phospho-5'-adenylyl sulfate (PAPS) as sulfonate donor. In Arabidopsis thaliana (Mouse-ear cress), this protein is Cytosolic sulfotransferase 3 (SOT3).